Here is a 406-residue protein sequence, read N- to C-terminus: Arginine deiminase (406 aa).

Cysteine 396 serves as the catalytic Amidino-cysteine intermediate.

Belongs to the arginine deiminase family.

It is found in the cytoplasm. The catalysed reaction is L-arginine + H2O = L-citrulline + NH4(+). It participates in amino-acid degradation; L-arginine degradation via ADI pathway; carbamoyl phosphate from L-arginine: step 1/2. This chain is Arginine deiminase, found in Aliivibrio fischeri (strain ATCC 700601 / ES114) (Vibrio fischeri).